A 109-amino-acid chain; its full sequence is Ig kappa chain V region 3374 (109 aa).

The interval 1–24 is framework-1; it reads ADIVMTQTPASVSAAVGGTVTINC. The segment at 25 to 35 is complementarity-determining-1; sequence QASQNIDSWLA. The framework-2 stretch occupies residues 36 to 50; the sequence is WYQQKPGQPPKVLIY. A complementarity-determining-2 region spans residues 51-57; it reads RTSTLAS. The tract at residues 58-89 is framework-3; the sequence is GVPSRFKGSRSGTEFTLTISDLECADAATYYC. A complementarity-determining-3 region spans residues 90 to 98; sequence QSYYSISSA. Residues 99–108 form a framework-4 region; the sequence is FGGGTEVVVK.

In Oryctolagus cuniculus (Rabbit), this protein is Ig kappa chain V region 3374.